The following is a 164-amino-acid chain: Interferon gamma (164 aa).

The signal sequence occupies residues 1-19 (MTCQTYNLFVLSVIMIYYG). N-linked (GlcNAc...) asparagine glycosylation is found at Asn-42 and Asn-61.

Belongs to the type II (or gamma) interferon family. As to quaternary structure, homodimer.

Its subcellular location is the secreted. Functionally, produced by lymphocytes activated by specific antigens or mitogens. IFN-gamma, in addition to having antiviral activity, has important immunoregulatory functions. It is a potent activator of macrophages, it has antiproliferative effects on transformed cells and it can potentiate the antiviral and antitumor effects of the type I interferons. The protein is Interferon gamma (IFNG) of Meleagris gallopavo (Wild turkey).